A 1137-amino-acid polypeptide reads, in one-letter code: Eukaryotic translation initiation factor 3 subunit A (1137 aa).

In terms of domain architecture, PCI spans 319 to 501; that stretch reads LQRMAAHVLL…NSIYFGTDLT (183 aa). Basic and acidic residues-rich tracts occupy residues 588 to 623 and 829 to 899; these read QNNA…EERE and AAEE…RGGD. 2 disordered regions span residues 588–631 and 829–1137; these read QNNA…QNEI and AAEE…VKRR. Ser908 is subject to Phosphoserine. 4 stretches are compositionally biased toward basic and acidic residues: residues 922–971, 985–1046, 1054–1083, and 1106–1127; these read RGIE…EPDS, SRDE…EPQR, DAPR…RGDQ, and AREE…KAAD.

This sequence belongs to the eIF-3 subunit A family. In terms of assembly, component of the eukaryotic translation initiation factor 3 (eIF-3) complex. The eIF-3 complex interacts with pix.

It is found in the cytoplasm. RNA-binding component of the eukaryotic translation initiation factor 3 (eIF-3) complex, which is involved in protein synthesis of a specialized repertoire of mRNAs and, together with other initiation factors, stimulates binding of mRNA and methionyl-tRNAi to the 40S ribosome. The eIF-3 complex specifically targets and initiates translation of a subset of mRNAs involved in cell proliferation. The polypeptide is Eukaryotic translation initiation factor 3 subunit A (Drosophila yakuba (Fruit fly)).